A 223-amino-acid polypeptide reads, in one-letter code: Phosphoribosylformylglycinamidine synthase subunit PurQ (223 aa).

Residues 3 to 223 (FAVLVFPGSN…MVKSWREQHV (221 aa)) enclose the Glutamine amidotransferase type-1 domain. Cys-85 functions as the Nucleophile in the catalytic mechanism. Catalysis depends on residues His-193 and Glu-195.

In terms of assembly, part of the FGAM synthase complex composed of 1 PurL, 1 PurQ and 2 PurS subunits.

Its subcellular location is the cytoplasm. The enzyme catalyses N(2)-formyl-N(1)-(5-phospho-beta-D-ribosyl)glycinamide + L-glutamine + ATP + H2O = 2-formamido-N(1)-(5-O-phospho-beta-D-ribosyl)acetamidine + L-glutamate + ADP + phosphate + H(+). It carries out the reaction L-glutamine + H2O = L-glutamate + NH4(+). Its pathway is purine metabolism; IMP biosynthesis via de novo pathway; 5-amino-1-(5-phospho-D-ribosyl)imidazole from N(2)-formyl-N(1)-(5-phospho-D-ribosyl)glycinamide: step 1/2. Part of the phosphoribosylformylglycinamidine synthase complex involved in the purines biosynthetic pathway. Catalyzes the ATP-dependent conversion of formylglycinamide ribonucleotide (FGAR) and glutamine to yield formylglycinamidine ribonucleotide (FGAM) and glutamate. The FGAM synthase complex is composed of three subunits. PurQ produces an ammonia molecule by converting glutamine to glutamate. PurL transfers the ammonia molecule to FGAR to form FGAM in an ATP-dependent manner. PurS interacts with PurQ and PurL and is thought to assist in the transfer of the ammonia molecule from PurQ to PurL. The chain is Phosphoribosylformylglycinamidine synthase subunit PurQ from Staphylococcus aureus (strain Mu50 / ATCC 700699).